Consider the following 286-residue polypeptide: ATP synthase gamma chain (286 aa).

The protein belongs to the ATPase gamma chain family. In terms of assembly, F-type ATPases have 2 components, CF(1) - the catalytic core - and CF(0) - the membrane proton channel. CF(1) has five subunits: alpha(3), beta(3), gamma(1), delta(1), epsilon(1). CF(0) has three main subunits: a, b and c.

The protein localises to the cell inner membrane. Its function is as follows. Produces ATP from ADP in the presence of a proton gradient across the membrane. The gamma chain is believed to be important in regulating ATPase activity and the flow of protons through the CF(0) complex. The protein is ATP synthase gamma chain of Alteromonas mediterranea (strain DSM 17117 / CIP 110805 / LMG 28347 / Deep ecotype).